An 85-amino-acid chain; its full sequence is Putative septation protein SpoVG (85 aa).

Belongs to the SpoVG family.

Could be involved in septation. The polypeptide is Putative septation protein SpoVG (Archaeoglobus fulgidus (strain ATCC 49558 / DSM 4304 / JCM 9628 / NBRC 100126 / VC-16)).